Consider the following 807-residue polypeptide: Glycerol-3-phosphate acyltransferase (807 aa).

Residues 305 to 310 carry the HXXXXD motif motif; sequence CHRSHM.

The protein belongs to the GPAT/DAPAT family.

The protein resides in the cell inner membrane. The enzyme catalyses sn-glycerol 3-phosphate + an acyl-CoA = a 1-acyl-sn-glycero-3-phosphate + CoA. The protein operates within phospholipid metabolism; CDP-diacylglycerol biosynthesis; CDP-diacylglycerol from sn-glycerol 3-phosphate: step 1/3. The protein is Glycerol-3-phosphate acyltransferase of Aliivibrio fischeri (strain MJ11) (Vibrio fischeri).